The following is a 146-amino-acid chain: UPF0178 protein BcerKBAB4_2842 (146 aa).

The protein belongs to the UPF0178 family.

The protein is UPF0178 protein BcerKBAB4_2842 of Bacillus mycoides (strain KBAB4) (Bacillus weihenstephanensis).